The sequence spans 366 residues: DNA-directed RNA polymerase subunit alpha (366 aa).

Positions 1–260 are alpha N-terminal domain (alpha-NTD); the sequence is MAISDNGGGS…DQLQSFIGSE (260 aa). Residues 274-366 form an alpha C-terminal domain (alpha-CTD) region; the sequence is EGALPYDHNL…ENLSKQYSED (93 aa).

This sequence belongs to the RNA polymerase alpha chain family. Homodimer. The RNAP catalytic core consists of 2 alpha, 1 beta, 1 beta' and 1 omega subunit. When a sigma factor is associated with the core the holoenzyme is formed, which can initiate transcription.

The catalysed reaction is RNA(n) + a ribonucleoside 5'-triphosphate = RNA(n+1) + diphosphate. In terms of biological role, DNA-dependent RNA polymerase catalyzes the transcription of DNA into RNA using the four ribonucleoside triphosphates as substrates. This is DNA-directed RNA polymerase subunit alpha from Anaplasma marginale (strain St. Maries).